Consider the following 380-residue polypeptide: ATP phosphoribosyltransferase regulatory subunit (380 aa).

The protein belongs to the class-II aminoacyl-tRNA synthetase family. HisZ subfamily. As to quaternary structure, heteromultimer composed of HisG and HisZ subunits.

Its subcellular location is the cytoplasm. Its pathway is amino-acid biosynthesis; L-histidine biosynthesis; L-histidine from 5-phospho-alpha-D-ribose 1-diphosphate: step 1/9. In terms of biological role, required for the first step of histidine biosynthesis. May allow the feedback regulation of ATP phosphoribosyltransferase activity by histidine. The chain is ATP phosphoribosyltransferase regulatory subunit from Thermoanaerobacter sp. (strain X514).